The primary structure comprises 111 residues: Disintegrin lebein-1-alpha (111 aa).

Positions 1 to 20 (MIQVLLVTICLAVFPYQGSS) are cleaved as a signal peptide. Residues 21-47 (IILESGNVNDYEIVYPKKVTVLPTGAM) constitute a propeptide that is removed on maturation. Positions 47–111 (MNSGNPCCDP…SDCPRNPYKD (65 aa)) constitute a Disintegrin domain. Disulfide bonds link C53/C76, C67/C73, C72/C97, and C85/C104. Positions 89 to 91 (RGD) match the Cell attachment site motif.

This sequence belongs to the disintegrin family. Dimeric disintegrin subfamily. As to quaternary structure, heterodimer with subunit beta; disulfide-linked. Expressed by the venom gland.

Its subcellular location is the secreted. In terms of biological role, strongly inhibits ADP-induced platelet aggregation on human platelet-rich plasma. Also avidly binds to the laminin-binding beta-1 integrins (alpha-3/beta-1, alpha-6/beta-1, and alpha-7/beta-1) in an RGD-independent manner. The sequence is that of Disintegrin lebein-1-alpha from Macrovipera lebetinus (Levantine viper).